Here is a 419-residue protein sequence, read N- to C-terminus: Transcription termination factor Rho (419 aa).

In terms of domain architecture, Rho RNA-BD spans 48-123; the sequence is DIFGDGVLEI…LKVNAVNYDK (76 aa). RNA-binding regions lie at residues 61–66, 78–80, and 108–110; these read GFGFLR, DIY, and ERY. Residues 169–174, 181–186, and Arg-212 each bind ATP; these read GRGQRG and KAGKTI. The RNA-binding 2 stretch occupies residues 284–288; that stretch reads VLTGG.

The protein belongs to the Rho family. Homohexamer. The homohexamer assembles into an open ring structure.

Functionally, facilitates transcription termination by a mechanism that involves Rho binding to the nascent RNA, activation of Rho's RNA-dependent ATPase activity, and release of the mRNA from the DNA template. In Buchnera aphidicola subsp. Schizaphis graminum (strain Sg), this protein is Transcription termination factor Rho.